The following is a 228-amino-acid chain: uncharacterized protein (228 aa).

The next 5 helical transmembrane spans lie at His14 to Val34, Val42 to Leu62, Phe130 to Ser150, Phe156 to Met176, and Ile192 to Leu212.

The protein belongs to the AzlC family.

Its subcellular location is the cell membrane. This is an uncharacterized protein from Helicobacter pylori (strain ATCC 700392 / 26695) (Campylobacter pylori).